Here is a 217-residue protein sequence, read N- to C-terminus: GTPase IMAP family member GIMD1 (217 aa).

One can recognise an AIG1-type G domain in the interval Lys-6–Ala-217. GTP is bound by residues Gly-15–Ser-23, Ser-36, and His-148–Glu-150.

It belongs to the TRAFAC class TrmE-Era-EngA-EngB-Septin-like GTPase superfamily. AIG1/Toc34/Toc159-like paraseptin GTPase family. IAN subfamily.

This chain is GTPase IMAP family member GIMD1 (Gimd1), found in Mus musculus (Mouse).